Consider the following 165-residue polypeptide: E3 ubiquitin ligase complex SCF subunit sconC (165 aa).

The interaction with the F-box domain of F-box proteins stretch occupies residues 106-165 (ILAANYLDIKALLDVGCKTVANMIKGKSPEEIRKTFNIQNDFTPEEEDQIRRENEWAEDR).

This sequence belongs to the SKP1 family. In terms of assembly, component of the SCF (SKP1-CUL1-F-box protein) E3 ubiquitin ligase complexes.

The protein operates within protein modification; protein ubiquitination. Functionally, essential component of the SCF (SKP1-CUL1-F-box protein) E3 ubiquitin ligase complexes, which mediate the ubiquitination and subsequent proteasomal degradation of target proteins. Controls sulfur metabolite repression, probably by mediating the inactivation or degradation of the metR transcription factor. This is E3 ubiquitin ligase complex SCF subunit sconC (sconC) from Arthroderma otae (strain ATCC MYA-4605 / CBS 113480) (Microsporum canis).